Consider the following 101-residue polypeptide: MAKLSSINKNEKRKKLVKQYAAKYEKLKAIANDKSLDETERLIARLKMAEIPRNANPTRVRNRCATTGRPRGYYRKFGINRIELRDLGNKGLIPGLTKSSW.

Belongs to the universal ribosomal protein uS14 family. In terms of assembly, part of the 30S ribosomal subunit. Contacts proteins S3 and S10.

Functionally, binds 16S rRNA, required for the assembly of 30S particles and may also be responsible for determining the conformation of the 16S rRNA at the A site. The protein is Small ribosomal subunit protein uS14 of Erythrobacter litoralis (strain HTCC2594).